Here is a 333-residue protein sequence, read N- to C-terminus: Phosphoenolpyruvate transferase (333 aa).

Aspartate 65 is a binding site for 7,8-didemethyl-8-hydroxy-5-deazariboflavin.

It belongs to the CofD family. In terms of assembly, homodimer. Mg(2+) is required as a cofactor.

It catalyses the reaction enolpyruvoyl-2-diphospho-5'-guanosine + 7,8-didemethyl-8-hydroxy-5-deazariboflavin = dehydro coenzyme F420-0 + GMP + H(+). The protein operates within cofactor biosynthesis; coenzyme F420 biosynthesis. Catalyzes the transfer of the phosphoenolpyruvate moiety from enoylpyruvoyl-2-diphospho-5'-guanosine (EPPG) to 7,8-didemethyl-8-hydroxy-5-deazariboflavin (FO) with the formation of dehydro coenzyme F420-0 and GMP. This Mycobacterium leprae (strain TN) protein is Phosphoenolpyruvate transferase.